Here is a 991-residue protein sequence, read N- to C-terminus: 5'-3' exoribonuclease 2 (991 aa).

Residues 264-268 (TKKTK) carry the Nuclear localization signal motif. Over residues 404–418 (RRNENYRRRQQRESN) the composition is skewed to basic and acidic residues. 3 disordered regions span residues 404 to 461 (RRNE…TQKI), 547 to 582 (SIES…ENTD), and 872 to 991 (AERS…NGYY). Residues 433 to 452 (SVETQSTEVVTSSKSTSVDT) show a composition bias toward low complexity. 2 stretches are compositionally biased toward low complexity: residues 878 to 889 (SRRNNGNSYRGG) and 896 to 910 (RRSY…RQSY). Residues 926 to 938 (WSGNGNFPRSNAS) show a composition bias toward polar residues. Residues 946-958 (EGYGGRSRGGGYS) show a composition bias toward gly residues. Positions 980 to 991 (ESYNNNNRNGYY) are enriched in polar residues.

Belongs to the 5'-3' exonuclease family. XRN2/RAT1 subfamily. As to quaternary structure, interacts with din1/rai1; the interaction is direct, stabilizes dhp1 protein structure and may stimulate its exoribonuclease activity. The interaction also stimulates din1 pyrophosphohydrolase activity, probably by recruiting it to mRNA substrates.

The protein localises to the nucleus. Possesses 5'-&gt;3' exoribonuclease activity. Required for the processing of nuclear mRNA and rRNA precursors. May promote the termination of transcription by RNA polymerase II. Essential for vegetative cell growth and chromosome segregation. The sequence is that of 5'-3' exoribonuclease 2 (dhp1) from Schizosaccharomyces pombe (strain 972 / ATCC 24843) (Fission yeast).